The chain runs to 193 residues: Epididymal-specific lipocalin-12 (193 aa).

An N-terminal signal peptide occupies residues 1-19 (MGPWWALWLILTLPQILGG). Cysteine 88 and cysteine 193 are disulfide-bonded. N-linked (GlcNAc...) asparagine glycosylation is found at asparagine 143 and asparagine 172.

The protein belongs to the calycin superfamily. Lipocalin family. As to quaternary structure, monomer.

The protein resides in the secreted. Binds all-trans retinoic acid and may act as a retinoid carrier protein within the epididymis. May play a role in male fertility. This is Epididymal-specific lipocalin-12 (Lcn12) from Rattus norvegicus (Rat).